The sequence spans 714 residues: MVLTDSEIEFIRKELGRDPNPLEYGMLDVMFSEHCSYKSSRPVLGFFPTEGEGVIIGPGDDAGVVEVTDELAMAIGIESHNHPSAIEPYGGAGTGIGGILRDIISMGAMPIALLDSLRFGYLEDQKSRYLFEHVVKGISDYGNRVGVPTVAGEVEFDDNFQLNPLVNVMCAGLVRKDEIKRGIAPRPGDVFLLMGGRTGRDGIHGVTFASEELTSSSELEDRPAVQVGDPFTKKMVMEASFEIMEKIEVSGVKDLGGGGLTCCISELVAKCDNGARVNLEAIPLREEGMTPYEIMLSESQERMIFVLSPDRVDEAMEICRKYELPAAVIGEVTDTGRMIVESEGKVIADLPAKLLADPPVIEREAKKPDLPEGQVEVQHPLLTEALLKLLSSPNIASKRWVYRQYDHEVQIRTVVKPGDDAAVLRVDEKTGVALTVDCNSIHTKLDPYGGGAASVGEAIRNVVSMGAWPLCIVDCLNFGNPEKPEVFWQFRECVRGMADMAETFGTPVISGNVSFYNETEGVTVNPSPVVGVAGRLPLDSIKTMDFKAEGEKIIVIGDTKPELGASEYLRTVHGIVDGKPPETDLRAEFDAANSVRRIIERFGDKVTAIHDCSAGGIGVAVAEMAIKSGIGATIDTGKIPGSFSNIHEALFSESNGRYILTVTGSVEEIIQELEVPCAVIGTTGGGALKFDDVALDVSELYDAYHGVIEAYMST.

Residue His-34 is part of the active site. Tyr-37 provides a ligand contact to ATP. Mg(2+) is bound at residue Glu-78. Substrate contacts are provided by residues 79–82 (SHNH) and Arg-101. His-80 (proton acceptor) is an active-site residue. Asp-102 contributes to the Mg(2+) binding site. A substrate-binding site is contributed by Gln-226. Residue Asp-254 participates in Mg(2+) binding. 298–300 (ESQ) is a binding site for substrate. ATP-binding residues include Asp-474 and Gly-511. Residue Asn-512 participates in Mg(2+) binding. Residue Ser-514 coordinates substrate.

Belongs to the FGAMS family. Monomer. Part of the FGAM synthase complex composed of 1 PurL, 1 PurQ and 2 PurS subunits.

It is found in the cytoplasm. The enzyme catalyses N(2)-formyl-N(1)-(5-phospho-beta-D-ribosyl)glycinamide + L-glutamine + ATP + H2O = 2-formamido-N(1)-(5-O-phospho-beta-D-ribosyl)acetamidine + L-glutamate + ADP + phosphate + H(+). It participates in purine metabolism; IMP biosynthesis via de novo pathway; 5-amino-1-(5-phospho-D-ribosyl)imidazole from N(2)-formyl-N(1)-(5-phospho-D-ribosyl)glycinamide: step 1/2. Part of the phosphoribosylformylglycinamidine synthase complex involved in the purines biosynthetic pathway. Catalyzes the ATP-dependent conversion of formylglycinamide ribonucleotide (FGAR) and glutamine to yield formylglycinamidine ribonucleotide (FGAM) and glutamate. The FGAM synthase complex is composed of three subunits. PurQ produces an ammonia molecule by converting glutamine to glutamate. PurL transfers the ammonia molecule to FGAR to form FGAM in an ATP-dependent manner. PurS interacts with PurQ and PurL and is thought to assist in the transfer of the ammonia molecule from PurQ to PurL. In Methanothermobacter marburgensis (strain ATCC BAA-927 / DSM 2133 / JCM 14651 / NBRC 100331 / OCM 82 / Marburg) (Methanobacterium thermoautotrophicum), this protein is Phosphoribosylformylglycinamidine synthase subunit PurL.